Here is a 610-residue protein sequence, read N- to C-terminus: Calmegin (610 aa).

The signal sequence occupies residues M1–A19. Residues E20–W471 are Lumenal-facing. K128 is subject to N6-acetyllysine. Residues C151 and C185 are joined by a disulfide bond. The tract at residues V258–D338 is disordered. Basic and acidic residues predominate over residues P263 to I284. 8 repeat units span residues I267–E280, I284–E297, I303–D316, I322–E335, G339–R352, G356–K369, G370–Q383, and G384–F397. Basic and acidic residues predominate over residues D317–D332. The segment at D317–A350 is interaction with PPIB. C351 and C355 are joined by a disulfide. The helical transmembrane segment at L472 to W492 threads the bilayer. At P493–D610 the chain is on the cytoplasmic side. Over residues Q521–L548 the composition is skewed to basic and acidic residues. A disordered region spans residues Q521–D610. Residues E549–E571 are compositionally biased toward acidic residues. Phosphoserine is present on residues S560, S576, S579, S581, S591, S594, and S601. Over residues S601 to D610 the composition is skewed to basic residues.

The protein belongs to the calreticulin family. Interacts with PPIB. Interacts with ADAM2. Interacts with PDILT. Detected in testis (at protein level). Detected in testis.

Its subcellular location is the endoplasmic reticulum membrane. In terms of biological role, functions during spermatogenesis as a chaperone for a range of client proteins that are important for sperm adhesion onto the egg zona pellucida and for subsequent penetration of the zona pellucida. Required for normal sperm migration from the uterus into the oviduct. Required for normal male fertility. Binds calcium ions. The protein is Calmegin (CLGN) of Homo sapiens (Human).